We begin with the raw amino-acid sequence, 288 residues long: ATP synthase gamma chain (288 aa).

The protein belongs to the ATPase gamma chain family. As to quaternary structure, F-type ATPases have 2 components, CF(1) - the catalytic core - and CF(0) - the membrane proton channel. CF(1) has five subunits: alpha(3), beta(3), gamma(1), delta(1), epsilon(1). CF(0) has three main subunits: a, b and c.

Its subcellular location is the cell inner membrane. Its function is as follows. Produces ATP from ADP in the presence of a proton gradient across the membrane. The gamma chain is believed to be important in regulating ATPase activity and the flow of protons through the CF(0) complex. The polypeptide is ATP synthase gamma chain (Glaesserella parasuis serovar 5 (strain SH0165) (Haemophilus parasuis)).